The chain runs to 77 residues: Translation initiation factor IF-1, chloroplastic (77 aa).

One can recognise an S1-like domain in the interval 1-71 (MKEQKWIHEG…SRGRIIYRLR (71 aa)).

It belongs to the IF-1 family. As to quaternary structure, component of the 30S ribosomal translation pre-initiation complex which assembles on the 30S ribosome in the order IF-2 and IF-3, IF-1 and N-formylmethionyl-tRNA(fMet); mRNA recruitment can occur at any time during PIC assembly.

Its subcellular location is the plastid. It localises to the chloroplast. Functionally, one of the essential components for the initiation of protein synthesis. Stabilizes the binding of IF-2 and IF-3 on the 30S subunit to which N-formylmethionyl-tRNA(fMet) subsequently binds. Helps modulate mRNA selection, yielding the 30S pre-initiation complex (PIC). Upon addition of the 50S ribosomal subunit IF-1, IF-2 and IF-3 are released leaving the mature 70S translation initiation complex. The chain is Translation initiation factor IF-1, chloroplastic from Buxus microphylla (Littleleaf boxwood).